Here is a 273-residue protein sequence, read N- to C-terminus: Phosphonates import ATP-binding protein PhnC (273 aa).

The 244-residue stretch at 2–245 folds into the ABC transporter domain; that stretch reads LRIDKLTKRF…VAREIYGADA (244 aa). Residue 34–41 participates in ATP binding; the sequence is GRSGAGKS.

Belongs to the ABC transporter superfamily. Phosphonates importer (TC 3.A.1.9.1) family. In terms of assembly, the complex is composed of two ATP-binding proteins (PhnC), two transmembrane proteins (PhnE) and a solute-binding protein (PhnD).

It is found in the cell inner membrane. The catalysed reaction is phosphonate(out) + ATP + H2O = phosphonate(in) + ADP + phosphate + H(+). Its function is as follows. Part of the ABC transporter complex PhnCDE involved in phosphonates import. Responsible for energy coupling to the transport system. This Ruegeria pomeroyi (strain ATCC 700808 / DSM 15171 / DSS-3) (Silicibacter pomeroyi) protein is Phosphonates import ATP-binding protein PhnC.